The sequence spans 663 residues: Probable rhamnogalacturonate lyase B (663 aa).

Residues 1-19 (MRLRTSLGVASACASVASA) form the signal peptide. Asn27, Asn110, Asn143, Asn239, Asn285, Asn495, Asn535, Asn569, Asn597, and Asn638 each carry an N-linked (GlcNAc...) asparagine glycan.

The protein belongs to the polysaccharide lyase 4 family.

Its subcellular location is the secreted. It carries out the reaction Endotype eliminative cleavage of L-alpha-rhamnopyranosyl-(1-&gt;4)-alpha-D-galactopyranosyluronic acid bonds of rhamnogalacturonan I domains in ramified hairy regions of pectin leaving L-rhamnopyranose at the reducing end and 4-deoxy-4,5-unsaturated D-galactopyranosyluronic acid at the non-reducing end.. Functionally, pectinolytic enzymes consist of four classes of enzymes: pectin lyase, polygalacturonase, pectin methylesterase and rhamnogalacturonase. Degrades the rhamnogalacturonan I (RG-I) backbone of pectin. The chain is Probable rhamnogalacturonate lyase B (rglB) from Aspergillus flavus (strain ATCC 200026 / FGSC A1120 / IAM 13836 / NRRL 3357 / JCM 12722 / SRRC 167).